We begin with the raw amino-acid sequence, 221 residues long: Membrane protein 0 (221 aa).

The tract at residues 1–22 (MATVHYSRRPGTPPVTLTSSPG) is disordered. The PPXY motif motif lies at 44–47 (PPPY). A helical membrane pass occupies residues 100–120 (FLILFGILTLTAVVVAIVAVF).

This sequence belongs to the varicellovirus ORF0 protein family. As to quaternary structure, interacts with host ITCH; this interaction probably mediates ITCH degradation.

Its subcellular location is the host Golgi apparatus membrane. The chain is Membrane protein 0 from Homo sapiens (Human).